The following is a 173-amino-acid chain: uncharacterized protein (173 aa).

One can recognise an N-acetyltransferase domain in the interval 4–173 (VKIVQVSEKD…TDFLLKKALV (170 aa)). Residues 97–99 (IYL), 106–110 (RGLGK), and 136–138 (NEN) each bind acetyl-CoA.

This is an uncharacterized protein from Lactobacillus delbrueckii subsp. lactis.